The following is a 538-amino-acid chain: [Pyruvate dehydrogenase [acetyl-transferring]]-phosphatase 1, mitochondrial (538 aa).

The transit peptide at 1-71 (MPAPTQLFFP…WWQYTQGRRY (71 aa)) directs the protein to the mitochondrion. The region spanning 109–525 (VLGFDSNQLP…DDITIIVVQF (417 aa)) is the PPM-type phosphatase domain. 2 residues coordinate Mn(2+): aspartate 144 and glycine 145. N6-acetyllysine is present on lysine 202. The Mn(2+) site is built by aspartate 418 and aspartate 516.

The protein belongs to the PP2C family. In terms of assembly, heterodimer of a catalytic (PDP1) and a regulatory (PDPR) subunit. The cofactor is Mn(2+). Requires Mg(2+) as cofactor.

Its subcellular location is the mitochondrion. The enzyme catalyses O-phospho-L-seryl-[pyruvate dehydrogenase E1 alpha subunit] + H2O = L-seryl-[pyruvate dehydrogenase E1 alpha subunit] + phosphate. Its activity is regulated as follows. Magnesium-dependent and calcium-stimulated. PDP1 activity strongly depends on its Ca(2+)-dependent binding to the lipoyl domain of E2 subunit of component of the pyruvate dehydrogenase complex. Mitochondrial enzyme that catalyzes the dephosphorylation and concomitant reactivation of the alpha subunit of the E1 component of the pyruvate dehydrogenase complex (PDC), thereby stimulating the conversion of pyruvate into acetyl-CoA. This chain is [Pyruvate dehydrogenase [acetyl-transferring]]-phosphatase 1, mitochondrial (PDP1), found in Bos taurus (Bovine).